Consider the following 377-residue polypeptide: Glycine oxidase (377 aa).

FAD contacts are provided by residues 14–15, 34–35, 42–43, 47–49, and V180; these read VI, EK, AS, and AGM. Substrate contacts are provided by R309 and R336. Residue 334 to 340 coordinates FAD; that stretch reads HYRNGIL.

It belongs to the DAO family. ThiO subfamily. As to quaternary structure, homotetramer. FAD is required as a cofactor.

It catalyses the reaction glycine + O2 + H2O = glyoxylate + H2O2 + NH4(+). It carries out the reaction N-ethylglycine + O2 + H2O = ethylamine + glyoxylate + H2O2. The enzyme catalyses sarcosine + O2 + H2O = methylamine + glyoxylate + H2O2. The catalysed reaction is D-alanine + O2 + H2O = pyruvate + H2O2 + NH4(+). It functions in the pathway cofactor biosynthesis; thiamine diphosphate biosynthesis. Is inhibited at high substrate concentration. Its function is as follows. Catalyzes the FAD-dependent oxidative deamination of various amines and D-amino acids to yield the corresponding alpha-keto acids, ammonia/amine, and hydrogen peroxide. Oxidizes glycine, sarcosine (N-methylglycine), N-ethylglycine, D-proline, D-alanine, glycine-ethyl ester, and some other D-amino acids. Does not act on L-proline. Is essential for thiamine biosynthesis since the oxidation of glycine catalyzed by ThiO generates the glycine imine intermediate (dehydroglycine) required for the biosynthesis of the thiazole ring of thiamine pyrophosphate. The polypeptide is Glycine oxidase (Geobacillus kaustophilus (strain HTA426)).